The chain runs to 1116 residues: Eukaryotic translation initiation factor 2-alpha kinase 3 (1116 aa).

Positions 1-29 are cleaved as a signal peptide; it reads MERAISPGLLVRALLLLLLLLGLAARTVA. Residues 30-514 are Lumenal-facing; it reads AGRARGLPAP…HYNKNIRKKD (485 aa). The disordered stretch occupies residues 77–101; the sequence is ALPAAAGEQEPRGPEPDDETELRPR. N-linked (GlcNAc...) asparagine glycosylation occurs at N258. Residues 515-535 form a helical membrane-spanning segment; the sequence is PVLLLHWWKEIVATILFCIIA. Over 536–1116 the chain is Cytoplasmic; sequence TTFIVRRLFH…NNSHSPLPSN (581 aa). Residues 550–571 are disordered; it reads RQRKESETQCQTENKYDSVSGE. A Protein kinase domain is found at 593-1077; it reads FEPIQCLGRG…AINIIENAVF (485 aa). 599-607 serves as a coordination point for ATP; sequence LGRGGFGVV. Position 619 is a phosphotyrosine; by autocatalysis (Y619). K622 provides a ligand contact to ATP. The tract at residues 647 to 888 is insert loop; that stretch reads EHPGIVRYFN…SPKVYLYIQM (242 aa). S715 carries the post-translational modification Phosphoserine. T802 bears the Phosphothreonine mark. The segment at 841–863 is disordered; sequence KPTSSKSSSEATLSISPPRPTTL. The segment covering 844 to 856 has biased composition (low complexity); it reads SSKSSSEATLSIS. Catalysis depends on D937, which acts as the Proton acceptor. Residue T982 is modified to Phosphothreonine. The disordered stretch occupies residues 1090–1116; that stretch reads QRSRSLSSSGTKHSRQSNNSHSPLPSN. S1094 carries the post-translational modification Phosphoserine. Residues 1105 to 1116 are compositionally biased toward polar residues; that stretch reads QSNNSHSPLPSN.

This sequence belongs to the protein kinase superfamily. Ser/Thr protein kinase family. GCN2 subfamily. Forms dimers with HSPA5/BIP in resting cells. Homotetramerizes in response to endoplasmic reticulum (ER) stress, leading to its activation. Interacts with HSP90B1/GRP94. Interacts with DNAJC3; inhibiting EIF2AK3/PERK activity. Interacts with ATAD3A; ATAD3A and EIF2S1/eIF-2-alpha occupy a common binding site within the cytoplasmic loop of EIF2AK3/PERK, leading to prevent EIF2AK3/PERK association with its substrate EIF2S1/eIF-2-alpha. Interacts with MFN2. Interacts with TMEM33. Interacts with PDIA6. Interacts with LACC1. Oligomerization of the N-terminal ER luminal domain by ER stress promotes EIF2AK3/PERK trans-autophosphorylation of the C-terminal cytoplasmic kinase domain at multiple residues including Thr-982 on the kinase activation loop. Autophosphorylated at Tyr-619 following endoplasmic reticulum stress, leading to activate its activity. Dephosphorylated at Tyr-619 by PTPN1/PTP1B, leading to inactivate its enzyme activity. Phosphorylation at Thr-802 by AKT (AKT1, AKT2 and/or AKT3) inactivates EIF2AK3/PERK. Post-translationally, ADP-ribosylated by PARP16 upon ER stress, which increases kinase activity. As to expression, ubiquitous. A high level expression is seen in secretory tissues.

The protein localises to the endoplasmic reticulum membrane. It carries out the reaction L-seryl-[protein] + ATP = O-phospho-L-seryl-[protein] + ADP + H(+). The catalysed reaction is L-threonyl-[protein] + ATP = O-phospho-L-threonyl-[protein] + ADP + H(+). The enzyme catalyses L-tyrosyl-[protein] + ATP = O-phospho-L-tyrosyl-[protein] + ADP + H(+). Its activity is regulated as follows. Inhibited by HSPA5/BIP in absence of stress. Perturbation in protein folding in the endoplasmic reticulum (ER) promotes reversible dissociation from HSPA5/BIP and oligomerization, resulting in trans-autophosphorylation and kinase activity induction. Inactivated following phosphorylation at Thr-802 by AKT (AKT1, AKT2 and/or AKT3). Inhibited by ATAD3A at mitochondria-endoplasmic reticulum contact sites, providing a safe haven for mitochondrial protein translation during ER stress. Metabolic-stress sensing protein kinase that phosphorylates the alpha subunit of eukaryotic translation initiation factor 2 (EIF2S1/eIF-2-alpha) in response to various stress, such as unfolded protein response (UPR). Key effector of the integrated stress response (ISR) to unfolded proteins: EIF2AK3/PERK specifically recognizes and binds misfolded proteins, leading to its activation and EIF2S1/eIF-2-alpha phosphorylation. EIF2S1/eIF-2-alpha phosphorylation in response to stress converts EIF2S1/eIF-2-alpha in a global protein synthesis inhibitor, leading to a global attenuation of cap-dependent translation, while concomitantly initiating the preferential translation of ISR-specific mRNAs, such as the transcriptional activators ATF4 and QRICH1, and hence allowing ATF4- and QRICH1-mediated reprogramming. The EIF2AK3/PERK-mediated unfolded protein response increases mitochondrial oxidative phosphorylation by promoting ATF4-mediated expression of COX7A2L/SCAF1, thereby increasing formation of respiratory chain supercomplexes. In contrast to most subcellular compartments, mitochondria are protected from the EIF2AK3/PERK-mediated unfolded protein response due to EIF2AK3/PERK inhibition by ATAD3A at mitochondria-endoplasmic reticulum contact sites. In addition to EIF2S1/eIF-2-alpha, also phosphorylates NFE2L2/NRF2 in response to stress, promoting release of NFE2L2/NRF2 from the BCR(KEAP1) complex, leading to nuclear accumulation and activation of NFE2L2/NRF2. Serves as a critical effector of unfolded protein response (UPR)-induced G1 growth arrest due to the loss of cyclin-D1 (CCND1). Involved in control of mitochondrial morphology and function. The polypeptide is Eukaryotic translation initiation factor 2-alpha kinase 3 (Homo sapiens (Human)).